A 95-amino-acid chain; its full sequence is MKFRPLHDRILVKRVEEETKTKGGIIIPDTAKEKPIEGKVMAVGNGRLGEDGKLIPLEVKKGDRVLFGKYGGTEVKMDGQEYLIMREDDILGILE.

This sequence belongs to the GroES chaperonin family. In terms of assembly, heptamer of 7 subunits arranged in a ring. Interacts with the chaperonin GroEL.

The protein resides in the cytoplasm. Together with the chaperonin GroEL, plays an essential role in assisting protein folding. The GroEL-GroES system forms a nano-cage that allows encapsulation of the non-native substrate proteins and provides a physical environment optimized to promote and accelerate protein folding. GroES binds to the apical surface of the GroEL ring, thereby capping the opening of the GroEL channel. The protein is Co-chaperonin GroES of Desulfosudis oleivorans (strain DSM 6200 / JCM 39069 / Hxd3) (Desulfococcus oleovorans).